Consider the following 220-residue polypeptide: 7-cyano-7-deazaguanine synthase (220 aa).

11 to 21 is a binding site for ATP; it reads VSGGMDSVTLM. Zn(2+)-binding residues include Cys186, Cys194, Cys197, and Cys200.

This sequence belongs to the QueC family. Zn(2+) is required as a cofactor.

The catalysed reaction is 7-carboxy-7-deazaguanine + NH4(+) + ATP = 7-cyano-7-deazaguanine + ADP + phosphate + H2O + H(+). Its pathway is purine metabolism; 7-cyano-7-deazaguanine biosynthesis. Functionally, catalyzes the ATP-dependent conversion of 7-carboxy-7-deazaguanine (CDG) to 7-cyano-7-deazaguanine (preQ(0)). The protein is 7-cyano-7-deazaguanine synthase of Porphyromonas gingivalis (strain ATCC 33277 / DSM 20709 / CIP 103683 / JCM 12257 / NCTC 11834 / 2561).